The primary structure comprises 422 residues: Phospholipase D Z (422 aa).

A signal peptide spans 1–18; that stretch reads MMMKLLFLIALFGCVVNS. The N-linked (GlcNAc...) asparagine glycan is linked to asparagine 53. The PLD phosphodiesterase 1 domain maps to 148-175; sequence GAGILHTKVIVVDQVSAYLGSANLDWRS. Residues histidine 153, lysine 155, and aspartate 160 contribute to the active site. Residues asparagine 225 and asparagine 320 are each glycosylated (N-linked (GlcNAc...) asparagine). The 27-residue stretch at 357 to 383 folds into the PLD phosphodiesterase 2 domain; the sequence is FTRVNHAKYMVTDEQSYVGTSNWSEDY. Catalysis depends on residues histidine 362, lysine 364, and aspartate 369. An N-linked (GlcNAc...) asparagine glycan is attached at asparagine 378.

Belongs to the phospholipase D family.

The enzyme catalyses a 1,2-diacyl-sn-glycero-3-phosphocholine + H2O = a 1,2-diacyl-sn-glycero-3-phosphate + choline + H(+). Its activity is regulated as follows. Inhibited by butan-1-ol. Its function is as follows. Hydrolyzes membrane phospholipids, such as PtdCho (phosphatidylcholine), producing the free headgroup and PtdOH (phosphatidic acid; signaling molecule on its own). This is Phospholipase D Z (pldZ) from Dictyostelium discoideum (Social amoeba).